The primary structure comprises 184 residues: MREYKLVVLGSGGVGKSALTVQFVQGIFVEKYDPTIEDSYRKQVEVDGQQCMLEILDTAGTEQFTAMRDLYMKNGQGFALVYSITAQSTFNDLQDLREQILRVKDTDDVPMILVGNKCDLEDERVVGKEQGQNLARQWNNCAFLESSAKSKINVNEIFYDLVRQINRKTPVPGKARKKSTCHLL.

Residue 10–17 (GSGGVGKS) coordinates GTP. Residues 32–40 (YDPTIEDSY) carry the Effector region motif. GTP is bound by residues 57 to 61 (DTAGT) and 116 to 119 (NKCD). Cysteine 181 carries the cysteine methyl ester modification. Cysteine 181 is lipidated: S-geranylgeranyl cysteine. A propeptide spans 182–184 (HLL) (removed in mature form).

It belongs to the small GTPase superfamily. Ras family.

Its subcellular location is the cell membrane. It localises to the cytoplasm. It is found in the cytosol. The protein resides in the cell junction. The catalysed reaction is GTP + H2O = GDP + phosphate + H(+). Probable GTP-binding protein that possesses GTPase activity. May play a role in endothelial cell polarity and endothelial barrier function. The protein is Ras-related protein Rap-1b (rap1b) of Xenopus laevis (African clawed frog).